We begin with the raw amino-acid sequence, 236 residues long: Ribonuclease 3 (236 aa).

In terms of domain architecture, RNase III spans 13–138 (TEKVFKISGY…LIGAIYVDGG (126 aa)). Glu-51 is a binding site for Mg(2+). Asp-55 is a catalytic residue. Positions 124 and 127 each coordinate Mg(2+). Glu-127 is an active-site residue. The DRBM domain maps to 164 to 232 (DAKTALQEWA…AKLMLEKVTK (69 aa)).

This sequence belongs to the ribonuclease III family. Homodimer. It depends on Mg(2+) as a cofactor.

Its subcellular location is the cytoplasm. The enzyme catalyses Endonucleolytic cleavage to 5'-phosphomonoester.. Functionally, digests double-stranded RNA. Involved in the processing of primary rRNA transcript to yield the immediate precursors to the large and small rRNAs (23S and 16S). Processes some mRNAs, and tRNAs when they are encoded in the rRNA operon. Processes pre-crRNA and tracrRNA of type II CRISPR loci if present in the organism. The polypeptide is Ribonuclease 3 (Anaplasma phagocytophilum (strain HZ)).